Here is a 557-residue protein sequence, read N- to C-terminus: Urocanate hydratase (557 aa).

The segment at 1-20 (MSNPRHNEREVRSPRGDELN) is disordered. NAD(+) is bound by residues 52–53 (GG), Gln-130, 176–178 (GMG), Glu-196, Arg-201, 242–243 (NA), 263–267 (QTSAH), 273–274 (YL), and Tyr-322. Cys-410 is an active-site residue. Gly-492 lines the NAD(+) pocket.

The protein belongs to the urocanase family. Requires NAD(+) as cofactor.

It localises to the cytoplasm. The enzyme catalyses 4-imidazolone-5-propanoate = trans-urocanate + H2O. It functions in the pathway amino-acid degradation; L-histidine degradation into L-glutamate; N-formimidoyl-L-glutamate from L-histidine: step 2/3. Functionally, catalyzes the conversion of urocanate to 4-imidazolone-5-propionate. The sequence is that of Urocanate hydratase from Brucella melitensis biotype 2 (strain ATCC 23457).